The following is a 1068-amino-acid chain: Carbamoyl phosphate synthase large chain (1068 aa).

The interval 1 to 401 (MPLNKDIKKV…AFLKGTRSLE (401 aa)) is carboxyphosphate synthetic domain. Positions 129, 169, 175, 176, 208, 210, 215, 241, 242, 243, 284, and 298 each coordinate ATP. In terms of domain architecture, ATP-grasp 1 spans 133–327 (RNVMSRINGP…IAKVASKIAL (195 aa)). Mg(2+) contacts are provided by Q284, E298, and N300. 3 residues coordinate Mn(2+): Q284, E298, and N300. The interval 402-549 (IGKYSLEHKK…YSTYDVYDEV (148 aa)) is oligomerization domain. Residues 550-932 (EVSKNKKVIV…ALYKGFIGAN (383 aa)) form a carbamoyl phosphate synthetic domain region. The ATP-grasp 2 domain occupies 674-864 (DELLEKLKIA…IVDIATRVML (191 aa)). Positions 710, 749, 751, 755, 780, 781, 782, 783, 823, and 835 each coordinate ATP. Positions 823, 835, and 837 each coordinate Mg(2+). Mn(2+) contacts are provided by Q823, E835, and N837. The 136-residue stretch at 933-1068 (MSIKKEKGTV…ETLYIFDLSN (136 aa)) folds into the MGS-like domain. An allosteric domain region spans residues 933–1068 (MSIKKEKGTV…ETLYIFDLSN (136 aa)).

This sequence belongs to the CarB family. As to quaternary structure, composed of two chains; the small (or glutamine) chain promotes the hydrolysis of glutamine to ammonia, which is used by the large (or ammonia) chain to synthesize carbamoyl phosphate. Tetramer of heterodimers (alpha,beta)4. Mg(2+) serves as cofactor. Requires Mn(2+) as cofactor.

It carries out the reaction hydrogencarbonate + L-glutamine + 2 ATP + H2O = carbamoyl phosphate + L-glutamate + 2 ADP + phosphate + 2 H(+). The enzyme catalyses hydrogencarbonate + NH4(+) + 2 ATP = carbamoyl phosphate + 2 ADP + phosphate + 2 H(+). Its pathway is amino-acid biosynthesis; L-arginine biosynthesis; carbamoyl phosphate from bicarbonate: step 1/1. The protein operates within pyrimidine metabolism; UMP biosynthesis via de novo pathway; (S)-dihydroorotate from bicarbonate: step 1/3. Functionally, large subunit of the glutamine-dependent carbamoyl phosphate synthetase (CPSase). CPSase catalyzes the formation of carbamoyl phosphate from the ammonia moiety of glutamine, carbonate, and phosphate donated by ATP, constituting the first step of 2 biosynthetic pathways, one leading to arginine and/or urea and the other to pyrimidine nucleotides. The large subunit (synthetase) binds the substrates ammonia (free or transferred from glutamine from the small subunit), hydrogencarbonate and ATP and carries out an ATP-coupled ligase reaction, activating hydrogencarbonate by forming carboxy phosphate which reacts with ammonia to form carbamoyl phosphate. The sequence is that of Carbamoyl phosphate synthase large chain from Clostridium botulinum (strain Kyoto / Type A2).